The chain runs to 407 residues: Multifunctional CCA protein (407 aa).

The ATP site is built by Gly-8 and Arg-11. Residues Gly-8 and Arg-11 each contribute to the CTP site. Mg(2+)-binding residues include Asp-21 and Asp-23. Positions 91, 137, and 140 each coordinate ATP. CTP contacts are provided by Arg-91, Arg-137, and Arg-140. One can recognise an HD domain in the interval 228–329 (TGIHTLLVAE…VKIFNKLDVW (102 aa)).

Belongs to the tRNA nucleotidyltransferase/poly(A) polymerase family. Bacterial CCA-adding enzyme type 1 subfamily. In terms of assembly, monomer. Can also form homodimers and oligomers. It depends on Mg(2+) as a cofactor. Ni(2+) serves as cofactor.

It carries out the reaction a tRNA precursor + 2 CTP + ATP = a tRNA with a 3' CCA end + 3 diphosphate. It catalyses the reaction a tRNA with a 3' CCA end + 2 CTP + ATP = a tRNA with a 3' CCACCA end + 3 diphosphate. In terms of biological role, catalyzes the addition and repair of the essential 3'-terminal CCA sequence in tRNAs without using a nucleic acid template. Adds these three nucleotides in the order of C, C, and A to the tRNA nucleotide-73, using CTP and ATP as substrates and producing inorganic pyrophosphate. tRNA 3'-terminal CCA addition is required both for tRNA processing and repair. Also involved in tRNA surveillance by mediating tandem CCA addition to generate a CCACCA at the 3' terminus of unstable tRNAs. While stable tRNAs receive only 3'-terminal CCA, unstable tRNAs are marked with CCACCA and rapidly degraded. The sequence is that of Multifunctional CCA protein from Vibrio vulnificus (strain YJ016).